The following is a 195-amino-acid chain: Transmembrane protein 239 (195 aa).

2 helical membrane passes run 105-125 (LWGL…HALF) and 145-171 (HLLP…LLLF).

Its subcellular location is the membrane. The protein is Transmembrane protein 239 (TMEM239) of Homo sapiens (Human).